A 132-amino-acid chain; its full sequence is Large-conductance mechanosensitive channel (132 aa).

3 helical membrane-spanning segments follow: residues 14–34, 38–58, and 67–87; these read VVDL…VSSL, IITP…LHFG, and GNFI…FMFI.

It belongs to the MscL family. Homopentamer.

The protein resides in the cell membrane. Its function is as follows. Channel that opens in response to stretch forces in the membrane lipid bilayer. May participate in the regulation of osmotic pressure changes within the cell. The protein is Large-conductance mechanosensitive channel of Bacillus cereus (strain G9842).